We begin with the raw amino-acid sequence, 228 residues long: Ephrin-A5 (228 aa).

The signal sequence occupies residues 1 to 20; it reads MPHVEMLLLAVAALWVCVRG. Residues 29 to 162 enclose the Ephrin RBD domain; the sequence is ADRYAVYWNS…KLKVFVRPAN (134 aa). A glycan (N-linked (GlcNAc...) asparagine) is linked at Asn37. 2 disulfide bridges follow: Cys62–Cys102 and Cys90–Cys151. Asn203 carries GPI-anchor amidated asparagine lipidation. Positions 204–228 are cleaved as a propeptide — removed in mature form; sequence AAQTPRIPIRLLATLLFLLAMLLIL.

The protein belongs to the ephrin family. As to expression, expressed in a graded fashion across the tectum being more strongly expressed towards the posterior pole.

The protein localises to the cell membrane. In terms of biological role, cell surface GPI-bound ligand for Eph receptors, a family of receptor tyrosine kinases which are crucial for migration, repulsion and adhesion during neuronal, vascular and epithelial development. Binds promiscuously Eph receptors residing on adjacent cells, leading to contact-dependent bidirectional signaling into neighboring cells. Induces compartmentalized signaling within a caveolae-like membrane microdomain when bound to the extracellular domain of its cognate receptor. This signaling event requires the activity of the Fyn tyrosine kinase. Activates the EPHA3 receptor to regulate cell-cell adhesion and cytoskeletal organization. With the receptor EPHA2 may regulate lens fiber cells shape and interactions and be important for lens transparency maintenance. May function actively to stimulate axon fasciculation. Induces growth cone collapse and repulsion of retinal ganglion cell axons. The protein is Ephrin-A5 (EFNA5) of Gallus gallus (Chicken).